A 364-amino-acid polypeptide reads, in one-letter code: NADH-quinone oxidoreductase subunit H (364 aa).

8 helical membrane-spanning segments follow: residues 21–41 (AGQI…LLLA), 88–108 (VFLL…AVIP), 120–140 (VGIL…IMGG), 159–179 (MVSY…LAGS), 208–228 (LPLL…GLAE), 267–287 (IVLI…APFP), 301–321 (FYYF…VSMA), and 340–360 (VFLP…VFGP).

Belongs to the complex I subunit 1 family. NDH-1 is composed of 14 different subunits. Subunits NuoA, H, J, K, L, M, N constitute the membrane sector of the complex.

Its subcellular location is the cell inner membrane. It catalyses the reaction a quinone + NADH + 5 H(+)(in) = a quinol + NAD(+) + 4 H(+)(out). Functionally, NDH-1 shuttles electrons from NADH, via FMN and iron-sulfur (Fe-S) centers, to quinones in the respiratory chain. The immediate electron acceptor for the enzyme in this species is believed to be ubiquinone. Couples the redox reaction to proton translocation (for every two electrons transferred, four hydrogen ions are translocated across the cytoplasmic membrane), and thus conserves the redox energy in a proton gradient. This subunit may bind ubiquinone. The chain is NADH-quinone oxidoreductase subunit H from Phenylobacterium zucineum (strain HLK1).